Here is a 344-residue protein sequence, read N- to C-terminus: Phosphoribosylformylglycinamidine cyclo-ligase (344 aa).

This sequence belongs to the AIR synthase family.

The protein localises to the cytoplasm. The enzyme catalyses 2-formamido-N(1)-(5-O-phospho-beta-D-ribosyl)acetamidine + ATP = 5-amino-1-(5-phospho-beta-D-ribosyl)imidazole + ADP + phosphate + H(+). It functions in the pathway purine metabolism; IMP biosynthesis via de novo pathway; 5-amino-1-(5-phospho-D-ribosyl)imidazole from N(2)-formyl-N(1)-(5-phospho-D-ribosyl)glycinamide: step 2/2. This chain is Phosphoribosylformylglycinamidine cyclo-ligase, found in Laribacter hongkongensis (strain HLHK9).